The primary structure comprises 233 residues: UPF0502 protein Sden_2282 (233 aa).

Residues 178-198 (TQHQRPPQTPHLSSRTNVDNS) are compositionally biased toward polar residues. A disordered region spans residues 178 to 204 (TQHQRPPQTPHLSSRTNVDNSYESDER).

It belongs to the UPF0502 family.

This chain is UPF0502 protein Sden_2282, found in Shewanella denitrificans (strain OS217 / ATCC BAA-1090 / DSM 15013).